Reading from the N-terminus, the 146-residue chain is Large ribosomal subunit protein uL15 (146 aa).

Residues Met-1–Gln-54 are disordered. 2 stretches are compositionally biased toward gly residues: residues Arg-21–Ala-31 and Ser-42–Gly-52.

This sequence belongs to the universal ribosomal protein uL15 family. Part of the 50S ribosomal subunit.

Its function is as follows. Binds to the 23S rRNA. This Clostridium botulinum (strain Eklund 17B / Type B) protein is Large ribosomal subunit protein uL15.